The primary structure comprises 359 residues: Adenosine 3'-phospho 5'-phosphosulfate transporter 1 (359 aa).

Helical transmembrane passes span 26–46 (NMKL…YGIL), 68–88 (STFL…VIVL), 157–177 (YSIA…GKIS), 184–204 (TSYG…TSTF), 228–248 (SIIS…IEFI), 254–276 (VFFD…YYTI), and 300–320 (TLIY…LVFG). Positions 332 to 359 (KKHGGHSHGGSNAATTTTPSNNSNNTEK) are disordered. Low complexity predominate over residues 340–359 (GGSNAATTTTPSNNSNNTEK).

This sequence belongs to the nucleotide-sugar transporter family. SLC35B subfamily.

The protein resides in the golgi apparatus membrane. It carries out the reaction 3'-phosphoadenylyl sulfate(in) + adenosine 3',5'-bisphosphate(out) = 3'-phosphoadenylyl sulfate(out) + adenosine 3',5'-bisphosphate(in). Its function is as follows. Probably functions as a 3'-phosphoadenylyl sulfate:adenosine 3',5'-bisphosphate antiporter at the Golgi membranes. Mediates the transport from the cytosol into the lumen of the Golgi of 3'-phosphoadenylyl sulfate/adenosine 3'-phospho 5'-phosphosulfate (PAPS), a universal sulfuryl donor for sulfation events that take place in that compartment. In Dictyostelium discoideum (Social amoeba), this protein is Adenosine 3'-phospho 5'-phosphosulfate transporter 1 (slc35b2).